The primary structure comprises 637 residues: Coiled-coil domain-containing protein 22 homolog (637 aa).

2 coiled-coil regions span residues 322-489 (ETEI…YKQA) and 608-637 (SDRVVQDLKNIKSENQSLIKQIKTLIETKN).

It belongs to the CCDC22 family.

The polypeptide is Coiled-coil domain-containing protein 22 homolog (Dictyostelium discoideum (Social amoeba)).